We begin with the raw amino-acid sequence, 315 residues long: Ribosomal RNA small subunit methyltransferase H (315 aa).

S-adenosyl-L-methionine is bound by residues 37-39, Asp57, Phe83, Asp105, and Gln112; that span reads GGH.

This sequence belongs to the methyltransferase superfamily. RsmH family.

Its subcellular location is the cytoplasm. The catalysed reaction is cytidine(1402) in 16S rRNA + S-adenosyl-L-methionine = N(4)-methylcytidine(1402) in 16S rRNA + S-adenosyl-L-homocysteine + H(+). Its function is as follows. Specifically methylates the N4 position of cytidine in position 1402 (C1402) of 16S rRNA. This chain is Ribosomal RNA small subunit methyltransferase H, found in Pseudomonas putida (strain GB-1).